We begin with the raw amino-acid sequence, 163 residues long: Putative 4-hydroxy-4-methyl-2-oxoglutarate aldolase (163 aa).

Residues 76 to 79 and R98 each bind substrate; that span reads GDMI. D99 is a binding site for a divalent metal cation.

It belongs to the class II aldolase/RraA-like family. Homotrimer. Requires a divalent metal cation as cofactor.

It carries out the reaction 4-hydroxy-4-methyl-2-oxoglutarate = 2 pyruvate. The enzyme catalyses oxaloacetate + H(+) = pyruvate + CO2. Its function is as follows. Catalyzes the aldol cleavage of 4-hydroxy-4-methyl-2-oxoglutarate (HMG) into 2 molecules of pyruvate. Also contains a secondary oxaloacetate (OAA) decarboxylase activity due to the common pyruvate enolate transition state formed following C-C bond cleavage in the retro-aldol and decarboxylation reactions. In Pseudomonas fluorescens (strain SBW25), this protein is Putative 4-hydroxy-4-methyl-2-oxoglutarate aldolase.